The following is a 159-amino-acid chain: Aspartate carbamoyltransferase regulatory chain (159 aa).

The Zn(2+) site is built by Cys113, Cys118, Cys143, and Cys146.

The protein belongs to the PyrI family. As to quaternary structure, contains catalytic and regulatory chains. Zn(2+) is required as a cofactor.

Involved in allosteric regulation of aspartate carbamoyltransferase. The protein is Aspartate carbamoyltransferase regulatory chain of Methanococcoides burtonii (strain DSM 6242 / NBRC 107633 / OCM 468 / ACE-M).